The sequence spans 423 residues: Gamma-glutamyl phosphate reductase (423 aa).

Belongs to the gamma-glutamyl phosphate reductase family.

It localises to the cytoplasm. It catalyses the reaction L-glutamate 5-semialdehyde + phosphate + NADP(+) = L-glutamyl 5-phosphate + NADPH + H(+). It participates in amino-acid biosynthesis; L-proline biosynthesis; L-glutamate 5-semialdehyde from L-glutamate: step 2/2. Its function is as follows. Catalyzes the NADPH-dependent reduction of L-glutamate 5-phosphate into L-glutamate 5-semialdehyde and phosphate. The product spontaneously undergoes cyclization to form 1-pyrroline-5-carboxylate. In Pseudomonas putida (strain W619), this protein is Gamma-glutamyl phosphate reductase.